The primary structure comprises 602 residues: Multidrug and toxin extrusion protein 2 (602 aa).

At methionine 1–threonine 33 the chain is on the cytoplasmic side. Residues leucine 34–valine 54 form a helical membrane-spanning segment. Topologically, residues serine 55–glutamate 66 are extracellular. A helical transmembrane segment spans residues leucine 67–glycine 87. The Cytoplasmic segment spans residues leucine 88 to leucine 119. Residues leucine 120–phenylalanine 140 traverse the membrane as a helical segment. Over arginine 141 to tyrosine 153 the chain is Extracellular. Residues valine 154–leucine 174 traverse the membrane as a helical segment. At glutamine 175–glutamine 219 the chain is on the cytoplasmic side. Residues valine 220–valine 240 form a helical membrane-spanning segment. At leucine 241–serine 248 the chain is on the extracellular side. Residues alanine 249–leucine 269 form a helical membrane-spanning segment. Residues lysine 270–glycine 289 are Cytoplasmic-facing. A helical transmembrane segment spans residues proline 290–tyrosine 309. At glutamate 310–glutamine 327 the chain is on the extracellular side. Residues alanine 328–valine 348 form a helical membrane-spanning segment. The Cytoplasmic segment spans residues cysteine 349–alanine 368. Residues valine 369–leucine 389 form a helical membrane-spanning segment. Topologically, residues lysine 390–aspartate 402 are extracellular. The chain crosses the membrane as a helical span at residues valine 403–isoleucine 423. The Cytoplasmic segment spans residues cysteine 424–alanine 442. Residues valine 443–valine 463 traverse the membrane as a helical segment. Residues arginine 464–arginine 466 lie on the Extracellular side of the membrane. A helical transmembrane segment spans residues isoleucine 467–alanine 487. Residues tyrosine 488–arginine 578 lie on the Cytoplasmic side of the membrane. The interval lysine 503 to serine 529 is disordered. The segment covering arginine 507–threonine 518 has biased composition (polar residues). A helical membrane pass occupies residues glycine 579–alanine 599. Residues threonine 600–histidine 602 lie on the Extracellular side of the membrane.

This sequence belongs to the multi antimicrobial extrusion (MATE) (TC 2.A.66.1) family. High expression in kidney. Very small expression in adrenal gland and lung. In terms of tissue distribution, high expression in kidney. Very small expression in brain and testis. As to expression, ubiquitously expressed in all tissues examined except the kidney.

Its subcellular location is the cell membrane. The protein localises to the apical cell membrane. It catalyses the reaction thiamine(out) + H(+)(in) = thiamine(in) + H(+)(out). The enzyme catalyses estrone 3-sulfate(in) + H(+)(out) = estrone 3-sulfate(out) + H(+)(in). It carries out the reaction creatinine(in) + H(+)(out) = creatinine(out) + H(+)(in). Multidrug efflux pump that functions as a H(+)/organic cation antiporter. Mediates the efflux of cationic compounds, such as the model cations, tetraethylammonium (TEA) and 1-methyl-4-phenylpyridinium (MPP+), the platinum-based drug oxaliplatin or weak bases that are positively charged at physiological pH, cimetidine, the platinum-based drugs cisplatin and oxaliplatin or the antidiabetic drug metformin. Mediates the efflux of endogenous compounds such as, creatinine, thiamine and estrone-3-sulfate. Plays a physiological role in the excretion of drugs, toxins and endogenous metabolites through the kidney. Its function is as follows. Non-functional protein. The protein is Multidrug and toxin extrusion protein 2 of Homo sapiens (Human).